The chain runs to 364 residues: GTPase Obg (364 aa).

The Obg domain maps to 1 to 159 (MKFIDEARIE…RNLRLELKVL (159 aa)). The tract at residues 128–147 (IHFKSSTNRAPRQKTDGKAG) is disordered. The OBG-type G domain maps to 160-334 (ADVGLLGMPN…LVHAIQEYLD (175 aa)). GTP-binding positions include 166 to 173 (GMPNAGKS), 191 to 195 (FTTLH), 213 to 216 (DIPG), 284 to 287 (NKLD), and 315 to 317 (SAL). Mg(2+) contacts are provided by Ser-173 and Thr-193. Residues 340-364 (EDAAAAAPDQRLDPTLHNVDHDDQA) are disordered. Residues 349–364 (QRLDPTLHNVDHDDQA) are compositionally biased toward basic and acidic residues.

This sequence belongs to the TRAFAC class OBG-HflX-like GTPase superfamily. OBG GTPase family. Monomer. It depends on Mg(2+) as a cofactor.

It localises to the cytoplasm. In terms of biological role, an essential GTPase which binds GTP, GDP and possibly (p)ppGpp with moderate affinity, with high nucleotide exchange rates and a fairly low GTP hydrolysis rate. Plays a role in control of the cell cycle, stress response, ribosome biogenesis and in those bacteria that undergo differentiation, in morphogenesis control. This chain is GTPase Obg, found in Ralstonia pickettii (strain 12J).